The sequence spans 208 residues: NAD(P)H-hydrate epimerase (208 aa).

The 199-residue stretch at 10–208 folds into the YjeF N-terminal domain; sequence IRDAERQTLA…TLGVIMTPAN (199 aa). (6S)-NADPHX is bound at residue 54–58; the sequence is NNGGD. The K(+) site is built by Asn55 and Asp117. (6S)-NADPHX contacts are provided by residues 121–127 and Asp150; that span reads GIGLNRP. Ser153 is a binding site for K(+).

The protein belongs to the NnrE/AIBP family. The cofactor is K(+).

The enzyme catalyses (6R)-NADHX = (6S)-NADHX. It catalyses the reaction (6R)-NADPHX = (6S)-NADPHX. In terms of biological role, catalyzes the epimerization of the S- and R-forms of NAD(P)HX, a damaged form of NAD(P)H that is a result of enzymatic or heat-dependent hydration. This is a prerequisite for the S-specific NAD(P)H-hydrate dehydratase to allow the repair of both epimers of NAD(P)HX. In Achromobacter xylosoxidans (strain A8), this protein is NAD(P)H-hydrate epimerase.